Consider the following 243-residue polypeptide: Glutathione S-transferase omega-2 (243 aa).

Residues 22 to 101 (GLIRIYSMRF…YLDDAYPGRK (80 aa)) enclose the GST N-terminal domain. The Nucleophile role is filled by cysteine 32. Glutathione is bound by residues lysine 59, isoleucine 72, and 85-86 (ES). The GST C-terminal domain occupies 106–231 (DPYERARQKM…IFQGFLNLYF (126 aa)).

This sequence belongs to the GST superfamily. Omega family. Expressed in a range of tissues, including the liver, kidney, skeletal muscle and prostate. Strongest expression in the testis.

It carries out the reaction RX + glutathione = an S-substituted glutathione + a halide anion + H(+). It catalyses the reaction L-dehydroascorbate + 2 glutathione = glutathione disulfide + L-ascorbate. The enzyme catalyses methylarsonate + 2 glutathione + H(+) = methylarsonous acid + glutathione disulfide + H2O. In terms of biological role, exhibits glutathione-dependent thiol transferase activity. Has high dehydroascorbate reductase activity and may contribute to the recycling of ascorbic acid. Participates in the biotransformation of inorganic arsenic and reduces monomethylarsonic acid (MMA). The chain is Glutathione S-transferase omega-2 (GSTO2) from Homo sapiens (Human).